Here is a 577-residue protein sequence, read N- to C-terminus: DNA primase (577 aa).

The CHC2-type zinc finger occupies 40-64 (CPFHHDKTPSFTVSNEKQFYYCFGC). Residues 255–337 (VYLLVVEGYI…KKTLKFILLP (83 aa)) form the Toprim domain. Mg(2+)-binding residues include Glu261, Asp305, and Asp307.

It belongs to the DnaG primase family. Monomer. Interacts with DnaB. The cofactor is Zn(2+). Mg(2+) is required as a cofactor.

It catalyses the reaction ssDNA + n NTP = ssDNA/pppN(pN)n-1 hybrid + (n-1) diphosphate.. Its function is as follows. RNA polymerase that catalyzes the synthesis of short RNA molecules used as primers for DNA polymerase during DNA replication. This Buchnera aphidicola subsp. Acyrthosiphon pisum (strain APS) (Acyrthosiphon pisum symbiotic bacterium) protein is DNA primase.